The primary structure comprises 371 residues: tRNA-specific 2-thiouridylase MnmA (371 aa).

ATP is bound by residues 14–21 (GMSGGVDS) and M40. The interval 100 to 102 (NPD) is interaction with target base in tRNA. C105 functions as the Nucleophile in the catalytic mechanism. Cysteines 105 and 201 form a disulfide. G129 serves as a coordination point for ATP. The interval 151 to 153 (KDQ) is interaction with tRNA. C201 acts as the Cysteine persulfide intermediate in catalysis. An interaction with tRNA region spans residues 309–310 (RY).

Belongs to the MnmA/TRMU family.

The protein localises to the cytoplasm. It carries out the reaction S-sulfanyl-L-cysteinyl-[protein] + uridine(34) in tRNA + AH2 + ATP = 2-thiouridine(34) in tRNA + L-cysteinyl-[protein] + A + AMP + diphosphate + H(+). Catalyzes the 2-thiolation of uridine at the wobble position (U34) of tRNA, leading to the formation of s(2)U34. The protein is tRNA-specific 2-thiouridylase MnmA of Halalkalibacterium halodurans (strain ATCC BAA-125 / DSM 18197 / FERM 7344 / JCM 9153 / C-125) (Bacillus halodurans).